Here is a 292-residue protein sequence, read N- to C-terminus: Phosphoribosylaminoimidazole-succinocarboxamide synthase (292 aa).

It belongs to the SAICAR synthetase family.

It carries out the reaction 5-amino-1-(5-phospho-D-ribosyl)imidazole-4-carboxylate + L-aspartate + ATP = (2S)-2-[5-amino-1-(5-phospho-beta-D-ribosyl)imidazole-4-carboxamido]succinate + ADP + phosphate + 2 H(+). The protein operates within purine metabolism; IMP biosynthesis via de novo pathway; 5-amino-1-(5-phospho-D-ribosyl)imidazole-4-carboxamide from 5-amino-1-(5-phospho-D-ribosyl)imidazole-4-carboxylate: step 1/2. The sequence is that of Phosphoribosylaminoimidazole-succinocarboxamide synthase from Thermodesulfovibrio yellowstonii (strain ATCC 51303 / DSM 11347 / YP87).